Reading from the N-terminus, the 508-residue chain is Steroid 17-alpha-hydroxylase/17,20 lyase (508 aa).

Position 442 (C442) interacts with heme.

This sequence belongs to the cytochrome P450 family. The cofactor is heme.

It is found in the endoplasmic reticulum membrane. It localises to the microsome membrane. The catalysed reaction is a C21-steroid + reduced [NADPH--hemoprotein reductase] + O2 = a 17alpha-hydroxy-C21-steroid + oxidized [NADPH--hemoprotein reductase] + H2O + H(+). The enzyme catalyses progesterone + reduced [NADPH--hemoprotein reductase] + O2 = 17alpha-hydroxyprogesterone + oxidized [NADPH--hemoprotein reductase] + H2O + H(+). It catalyses the reaction pregnenolone + reduced [NADPH--hemoprotein reductase] + O2 = 17alpha-hydroxypregnenolone + oxidized [NADPH--hemoprotein reductase] + H2O + H(+). It carries out the reaction 17alpha-hydroxyprogesterone + reduced [NADPH--hemoprotein reductase] + O2 = androst-4-ene-3,17-dione + acetate + oxidized [NADPH--hemoprotein reductase] + H2O + 2 H(+). The catalysed reaction is 17alpha-hydroxyprogesterone + reduced [NADPH--hemoprotein reductase] + O2 = 16alpha,17alpha-dihydroxyprogesterone + oxidized [NADPH--hemoprotein reductase] + H2O + H(+). The enzyme catalyses 16alpha,17alpha-dihydroxyprogesterone + reduced [NADPH--hemoprotein reductase] + O2 = 6beta,16alpha,17alpha-trihydroxyprogesterone + oxidized [NADPH--hemoprotein reductase] + H2O + H(+). It catalyses the reaction 17alpha-hydroxypregnenolone + reduced [NADPH--hemoprotein reductase] + O2 = 3beta-hydroxyandrost-5-en-17-one + acetate + oxidized [NADPH--hemoprotein reductase] + H2O + 2 H(+). It carries out the reaction 16alpha,17alpha-dihydroxypregnenolone + reduced [NADPH--hemoprotein reductase] + O2 = 3beta,16alpha-dihydroxy-androst-5-en-17-one + acetate + oxidized [NADPH--hemoprotein reductase] + H2O + 2 H(+). The catalysed reaction is 3beta-hydroxyandrost-5-en-17-one + reduced [NADPH--hemoprotein reductase] + O2 = 3beta,16alpha-dihydroxy-androst-5-en-17-one + oxidized [NADPH--hemoprotein reductase] + H2O + H(+). The enzyme catalyses androst-4-ene-3,17-dione + reduced [NADPH--hemoprotein reductase] + O2 = 16alpha-hydroxyandrost-4-ene-3,17-dione + oxidized [NADPH--hemoprotein reductase] + H2O + H(+). Its pathway is steroid hormone biosynthesis. It participates in steroid biosynthesis; glucocorticoid biosynthesis. With respect to regulation, regulated predominantly by intracellular cAMP levels. The 17,20-lyase activity is stimulated by cytochrome b5, which acts as an allosteric effector increasing the Vmax of the lyase activity. Its function is as follows. A cytochrome P450 monooxygenase involved in corticoid and androgen biosynthesis. Catalyzes 17-alpha hydroxylation of C21 steroids, which is common for both pathways. A second oxidative step, required only for androgen synthesis, involves an acyl-carbon cleavage. The 17-alpha hydroxy intermediates, as part of adrenal glucocorticoids biosynthesis pathway, are precursors of cortisol. Hydroxylates steroid hormones, pregnenolone and progesterone to form 17-alpha hydroxy metabolites, followed by the cleavage of the C17-C20 bond to form C19 steroids, dehydroepiandrosterone (DHEA) and androstenedione. Has 16-alpha hydroxylase activity. Catalyzes 16-alpha hydroxylation of 17-alpha hydroxy pregnenolone, followed by the cleavage of the C17-C20 bond to form 16-alpha-hydroxy DHEA. Also 16-alpha hydroxylates androgens, relevant for estriol synthesis. Mechanistically, uses molecular oxygen inserting one oxygen atom into a substrate, and reducing the second into a water molecule, with two electrons provided by NADPH via cytochrome P450 reductase (CPR; NADPH-ferrihemoprotein reductase). The sequence is that of Steroid 17-alpha-hydroxylase/17,20 lyase (CYP17A1) from Cavia porcellus (Guinea pig).